The chain runs to 481 residues: Proline--tRNA ligase (481 aa).

The protein belongs to the class-II aminoacyl-tRNA synthetase family. ProS type 3 subfamily. In terms of assembly, homodimer.

It is found in the cytoplasm. The catalysed reaction is tRNA(Pro) + L-proline + ATP = L-prolyl-tRNA(Pro) + AMP + diphosphate. Its function is as follows. Catalyzes the attachment of proline to tRNA(Pro) in a two-step reaction: proline is first activated by ATP to form Pro-AMP and then transferred to the acceptor end of tRNA(Pro). The polypeptide is Proline--tRNA ligase (Chlorobaculum tepidum (strain ATCC 49652 / DSM 12025 / NBRC 103806 / TLS) (Chlorobium tepidum)).